The following is a 132-amino-acid chain: Chaperone protein SycT (132 aa).

Binds to YopT.

In terms of biological role, functions as a specific chaperone for YopT. This Yersinia pestis protein is Chaperone protein SycT (sycT).